Here is a 570-residue protein sequence, read N- to C-terminus: La-related protein 7 (570 aa).

The residue at position 1 (methionine 1) is an N-acetylmethionine. Basic and acidic residues predominate over residues 1–16; it reads METENQKTMEESTKRK. Disordered stretches follow at residues 1 to 24 and 180 to 364; these read METENQKTMEESTKRKEEKKKRSR and LNNP…ERHK. The region spanning 22-116 is the HTH La-type RNA-binding domain; it reads RSRVKQVLAD…KPLGERPKDE (95 aa). In terms of domain architecture, RRM spans 119–197; the sequence is RTVYVELLPK…PRKPGIFPKT (79 aa). Residues 213 to 222 are compositionally biased toward basic residues; it reads KKKKKKKGRI. A Glycyl lysine isopeptide (Lys-Gly) (interchain with G-Cter in SUMO2) cross-link involves residue lysine 231. The residue at position 251 (threonine 251) is a Phosphothreonine. A phosphoserine mark is found at serine 253 and serine 256. At threonine 260 the chain carries Phosphothreonine. Residues 286-295 show a composition bias toward basic and acidic residues; sequence RAGKRERCSA. Residues serine 294 and serine 334 each carry the phosphoserine modification. Residue threonine 335 is modified to Phosphothreonine. Positions 340-349 are enriched in basic and acidic residues; the sequence is ETDRKGDSLS. Serine 347 carries the phosphoserine modification. Residues 350-363 show a composition bias toward basic residues; the sequence is KVKRKHKKKHKERH. A Glycyl lysine isopeptide (Lys-Gly) (interchain with G-Cter in SUMO2) cross-link involves residue lysine 406. Residues 438–551 form the xRRM domain; the sequence is QFVTGVIVKI…TEKLITKAEK (114 aa).

This sequence belongs to the LARP7 family. As to quaternary structure, core component of the 7SK RNP complex, at least composed of 7SK RNA, LARP7, MEPCE, HEXIM1 (or HEXIM2) and P-TEFb (composed of CDK9 and CCNT1/cyclin-T1). Interacts with METTL16. Interacts with RBM7; upon genotoxic stress this interaction is enhanced, triggering the release of inactive P-TEFb complex from the core, yielding to P-TEFb complex activation. Associates with box C/D small nucleolar ribonucleoprotein (snoRNP) complexes.

It localises to the nucleus. It is found in the nucleoplasm. In terms of biological role, RNA-binding protein that specifically binds distinct small nuclear RNA (snRNAs) and regulates their processing and function. Specifically binds the 7SK snRNA (7SK RNA) and acts as a core component of the 7SK ribonucleoprotein (RNP) complex, thereby acting as a negative regulator of transcription elongation by RNA polymerase II. The 7SK RNP complex sequesters the positive transcription elongation factor b (P-TEFb) in a large inactive 7SK RNP complex preventing RNA polymerase II phosphorylation and subsequent transcriptional elongation. The 7SK RNP complex also promotes snRNA gene transcription by RNA polymerase II via interaction with the little elongation complex (LEC). LARP7 specifically binds to the highly conserved 3'-terminal U-rich stretch of 7SK RNA; on stimulation, remains associated with 7SK RNA, whereas P-TEFb is released from the complex. LARP7 also acts as a regulator of mRNA splicing fidelity by promoting U6 snRNA processing. Specifically binds U6 snRNAs and associates with a subset of box C/D RNP complexes: promotes U6 snRNA 2'-O-methylation by facilitating U6 snRNA loading into box C/D RNP complexes. U6 snRNA 2'-O-methylation is required for mRNA splicing fidelity. Binds U6 snRNAs with a 5'-CAGGG-3' sequence motif. U6 snRNA processing is required for spermatogenesis. This Mus musculus (Mouse) protein is La-related protein 7.